The chain runs to 295 residues: GTPase Era (295 aa).

The 170-residue stretch at 7 to 176 folds into the Era-type G domain; the sequence is KTVSVCIIGR…ITSKAKIAPW (170 aa). Residues 15 to 22 are G1; it reads GRPNSGKS. Residue 15–22 participates in GTP binding; it reads GRPNSGKS. The G2 stretch occupies residues 41 to 45; the sequence is QTTRS. Residues 62–65 form a G3 region; it reads DTPG. GTP contacts are provided by residues 62–66 and 124–127; these read DTPGI and NKID. The G4 stretch occupies residues 124–127; sequence NKID. Residues 152 to 154 form a G5 region; sequence ISA. In terms of domain architecture, KH type-2 spans 204–281; sequence LQQELPYKLT…HLFLFVKVRE (78 aa).

This sequence belongs to the TRAFAC class TrmE-Era-EngA-EngB-Septin-like GTPase superfamily. Era GTPase family. In terms of assembly, monomer.

Its subcellular location is the cytoplasm. The protein localises to the cell inner membrane. In terms of biological role, an essential GTPase that binds both GDP and GTP, with rapid nucleotide exchange. Plays a role in 16S rRNA processing and 30S ribosomal subunit biogenesis and possibly also in cell cycle regulation and energy metabolism. This Rickettsia bellii (strain OSU 85-389) protein is GTPase Era.